We begin with the raw amino-acid sequence, 816 residues long: Sucrose synthase 2 (816 aa).

Residues 280-757 are GT-B glycosyltransferase; that stretch reads MVLNVVILSP…GLQRIEEKYT (478 aa).

This sequence belongs to the glycosyltransferase 1 family. Plant sucrose synthase subfamily. In terms of assembly, forms homotetramers and heterotetramers with SS1, all three possible heterotetramers are formed. Abundant in developing endosperm, low in aleurone, and undetected in coleoptiles and roots. Also detected in crude extracts of anthers and in immature embryos.

The catalysed reaction is an NDP-alpha-D-glucose + D-fructose = a ribonucleoside 5'-diphosphate + sucrose + H(+). Its function is as follows. Sucrose-cleaving enzyme that provides UDP-glucose and fructose for various metabolic pathways. This chain is Sucrose synthase 2 (SS2), found in Hordeum vulgare (Barley).